A 256-amino-acid polypeptide reads, in one-letter code: Calsenilin (256 aa).

The disordered stretch occupies residues 1 to 30 (MQRAKEVMKVSDGSLLGEPGRTPLSKKEGV). S14 is modified (phosphoserine). A Glycyl lysine isopeptide (Lys-Gly) (interchain with G-Cter in SUMO1) cross-link involves residue K26. Residues C45 and C46 are each lipidated (S-palmitoyl cysteine). A phosphoserine mark is found at S60 and S63. The EF-hand 1; degenerate domain occupies 67 to 123 (LELSAVRHQPEGLDQLQAQTKFTKKELQSLYRGFKNECPTGLVDEDTFKLIYSQFFP). A Glycyl lysine isopeptide (Lys-Gly) (interchain with G-Cter in SUMO1) cross-link involves residue K90. 3 EF-hand domains span residues 126–161 (DATTYAHFLFNAFDADGNGAIRFEDFVVGLSILLRG), 162–197 (TVHEKLKWAFNLYDINKDGYITKEEMLAIMKSIYDM), and 210–245 (APLEHVERFFQKMDRNQDGVVTIDEFLETCQKDENI). Residues D175, N177, D179, Y181, E186, D223, N225, D227, and E234 each contribute to the Ca(2+) site. The interaction with KCND2 stretch occupies residues 243–256 (ENIMSSMQLFENVI).

This sequence belongs to the recoverin family. As to quaternary structure, binds to DNA as a homomultimer. Dimerization is induced by binding to calcium. Interacts with the C-terminus of PSEN1 and PSEN2 and with PSEN2 CTF subunit. Associates with KCN1. Component of heteromultimeric potassium channels. Identified in potassium channel complexes containing KCND1, KCND2, KCND3, KCNIP1, KCNIP2, KCNIP3, KCNIP4, DPP6 and DPP10. Interacts with KCND2 and KCND3. Palmitoylated. Palmitoylation enhances association with the plasma membrane. In terms of processing, proteolytically cleaved by caspase-3.

It is found in the cytoplasm. Its subcellular location is the cell membrane. The protein localises to the endoplasmic reticulum. It localises to the golgi apparatus. The protein resides in the nucleus. In terms of biological role, regulatory subunit of Kv4/D (Shal)-type voltage-gated rapidly inactivating A-type potassium channels, such as KCND2/Kv4.2 and KCND3/Kv4.3. Modulates channel expression at the cell membrane, gating characteristics, inactivation kinetics and rate of recovery from inactivation in a calcium-dependent and isoform-specific manner. Its function is as follows. May play a role in the regulation of PSEN2 proteolytic processing and apoptosis. Together with PSEN2 involved in modulation of amyloid-beta formation. Calcium-dependent transcriptional repressor that binds to the DRE element of genes including PDYN and FOS. Affinity for DNA is reduced upon binding to calcium and enhanced by binding to magnesium. Seems to be involved in nociception. The sequence is that of Calsenilin (KCNIP3) from Bos taurus (Bovine).